The following is a 476-amino-acid chain: MQAFRQRIRQTVPEMRRVKQIHFVGIGGAGMGGIAEVLLNEGYQVTGSDIAESAVTSRLISLGAKISFSHHAENIEGASVVVVSSAIKGDNIEVITAHEKRIPVIQRAQMLAEIMRFRHGIAIAGTHGKTTTTAMVAMIYAQAGLDPTFVNGGLVKSAGTNAYLGCSRYLIAEADESDASFLHLQPMVSVVTNIEPEHMETYHGDFEEMKQTYVNFLRNLPFYGLSVMCADDPVLMELSSQVGRQVVTYGFSDEADYRIEDYQQTGFQGHYTVVAPNGERIDVLLNVPGKHNALNATAALTVAKEEGIENEAILTALAEFQGAGRRFDQLGQFIRPNGKVMLVDDYGHHPTEVNVTIQAARQGWENKRIVMIFQPHRYSRTRDLFDDFVQVLSQVDVLIMLDVYAAGEQAIAGADSRSLCRSIRNLGKVDPILVSDHKQLAEIVDQVIQDGDLILAQGAGNVSKLSRELALAWGKE.

Residue 125–131 (GTHGKTT) coordinates ATP.

Belongs to the MurCDEF family.

It is found in the cytoplasm. The catalysed reaction is UDP-N-acetyl-alpha-D-muramate + L-alanine + ATP = UDP-N-acetyl-alpha-D-muramoyl-L-alanine + ADP + phosphate + H(+). It functions in the pathway cell wall biogenesis; peptidoglycan biosynthesis. Functionally, cell wall formation. This Histophilus somni (strain 129Pt) (Haemophilus somnus) protein is UDP-N-acetylmuramate--L-alanine ligase.